A 361-amino-acid polypeptide reads, in one-letter code: Mannose-1-phosphate guanyltransferase 2 (361 aa).

Belongs to the transferase hexapeptide repeat family.

It is found in the cytoplasm. The enzyme catalyses alpha-D-mannose 1-phosphate + GTP + H(+) = GDP-alpha-D-mannose + diphosphate. The protein operates within nucleotide-sugar biosynthesis; GDP-alpha-D-mannose biosynthesis; GDP-alpha-D-mannose from alpha-D-mannose 1-phosphate (GTP route): step 1/1. Involved in cell wall synthesis where it is required for glycosylation. Involved in cell cycle progression through cell-size checkpoint. The polypeptide is Mannose-1-phosphate guanyltransferase 2 (MPG1) (Candida glabrata (strain ATCC 2001 / BCRC 20586 / JCM 3761 / NBRC 0622 / NRRL Y-65 / CBS 138) (Yeast)).